Consider the following 343-residue polypeptide: Biotin synthase (343 aa).

The region spanning 36–254 (RQVQVSTLLS…IAVARIMMPR (219 aa)) is the Radical SAM core domain. [4Fe-4S] cluster contacts are provided by Cys-51, Cys-55, and Cys-58. Residues Cys-95, Cys-126, Cys-186, and Arg-258 each coordinate [2Fe-2S] cluster.

It belongs to the radical SAM superfamily. Biotin synthase family. As to quaternary structure, homodimer. It depends on [4Fe-4S] cluster as a cofactor. Requires [2Fe-2S] cluster as cofactor.

The catalysed reaction is (4R,5S)-dethiobiotin + (sulfur carrier)-SH + 2 reduced [2Fe-2S]-[ferredoxin] + 2 S-adenosyl-L-methionine = (sulfur carrier)-H + biotin + 2 5'-deoxyadenosine + 2 L-methionine + 2 oxidized [2Fe-2S]-[ferredoxin]. It functions in the pathway cofactor biosynthesis; biotin biosynthesis; biotin from 7,8-diaminononanoate: step 2/2. Its function is as follows. Catalyzes the conversion of dethiobiotin (DTB) to biotin by the insertion of a sulfur atom into dethiobiotin via a radical-based mechanism. The polypeptide is Biotin synthase (Erwinia tasmaniensis (strain DSM 17950 / CFBP 7177 / CIP 109463 / NCPPB 4357 / Et1/99)).